An 861-amino-acid chain; its full sequence is MEELYHPKKVEQEAQKFWEETDAFKVDEEPGKEKFYCLSMFPYPSGKLHMGHVRNYTIGDVISRYQRMQGKNVLQPMGWDAFGLPAENAALKNNVAPAKWTYENIAYMKNQLKLLGFGYDWNRELATCRPEYYKWEQWFFTRLYEKGLVYKKMSTVNWDPVDETVLANEQVIDGKGWRSGAVVERREIPQWFIKITDYAEQLLNDLDKLENWPEQVKTMQRNWINKSEGVEFHFKLKDHDGDLQVYTTRPDTIMGVTYVAIAPQHPLALEAAASNPQLAKFLDECKNTKVAEADMATMEKRGMDTGFFVIHPLTNEPAPIWVANFVLMDYGSGAVMSVPGHDERDHEFALKYGLPIKQVISVIDADEVDIQEKAITEKGILVNSGEFTGMTSQEAFDAVAEKLTAMGIGEKKINYRLRDWGVSRQRYWGAPIPMMTQEDGTEVPVPLADLPVRLPEDVEMDGVKSPIKADPNWSKRSYNGQPATQETDTFDTFMESSWYYARFCCPNLESAMLDPAAANYWLPVDYYVGGIEHAILHLLYSRFFHKLLRDEGLVDSDEPFKKLLCQGMVIAETFYREDPSSKKTYFNPRDVRVELDTQGNSPKAFLIEDGQPVIIGPKEKMSKSKNNGVDPQELIDKYGADTVRLFTMFAAPPEQSLEWSESGVEGQHRFLRRLWKLVHTHVEKKGAAPLNVAELNETQRTLRRKTHETIKKMTDEFNHRMAINTGIAMVMELLNELSRFEDDSPQGLAVVQEALETAVLVLAPIVPHISHGLWRELGHEDVVMNAPWPQLDEKALEKDSIELVVQVNGKLRARIQAAASANKDELEKLAFDDENVQRFMEDKTVVKVIVVPGKLVNIVVK.

The 'HIGH' region signature appears at 42–52 (PYPSGKLHMGH). Positions 620 to 624 (KMSKS) match the 'KMSKS' region motif. Lys623 provides a ligand contact to ATP.

This sequence belongs to the class-I aminoacyl-tRNA synthetase family.

It is found in the cytoplasm. The enzyme catalyses tRNA(Leu) + L-leucine + ATP = L-leucyl-tRNA(Leu) + AMP + diphosphate. The polypeptide is Leucine--tRNA ligase (Hahella chejuensis (strain KCTC 2396)).